We begin with the raw amino-acid sequence, 393 residues long: Sialyltransferase-like protein 1 (393 aa).

The Cytoplasmic segment spans residues 1 to 8 (MKRPLRRP). Residues 9–27 (FAVLLFVVLCAAASFPSVL) form a helical; Signal-anchor for type II membrane protein membrane-spanning segment. The Lumenal segment spans residues 28–393 (RRSVGPAPVL…IAVPPVVFYH (366 aa)). Asn-49, Asn-212, and Asn-258 each carry an N-linked (GlcNAc...) asparagine glycan.

It belongs to the glycosyltransferase 29 family.

The protein resides in the golgi apparatus membrane. Possesses sialyltransferase-like activity in vitro. Transfers sialic acid to the oligosaccharide Gal-beta-1,3-GalNAc and to glycoproteins such as asialofetuin, alpha-1-acid glycoprotein (NeuAc-alpha-2,3-Gal-beta-1,3-GalNAc-) and andasialo-alpha-1-acid glycoprotein. The transferred sialic acid is linked to galactose of Gal-beta-1,3-GalNAc through alpha-2,6-linkage. In Oryza sativa subsp. indica (Rice), this protein is Sialyltransferase-like protein 1.